The following is a 126-amino-acid chain: Glycine cleavage system H protein (126 aa).

Residues 22–104 (VVFIGITDYA…YGAGWIIKVK (83 aa)) enclose the Lipoyl-binding domain. Lysine 63 is modified (N6-lipoyllysine).

It belongs to the GcvH family. In terms of assembly, the glycine cleavage system is composed of four proteins: P, T, L and H. (R)-lipoate serves as cofactor.

Functionally, the glycine cleavage system catalyzes the degradation of glycine. The H protein shuttles the methylamine group of glycine from the P protein to the T protein. The protein is Glycine cleavage system H protein of Porphyromonas gingivalis (strain ATCC 33277 / DSM 20709 / CIP 103683 / JCM 12257 / NCTC 11834 / 2561).